The sequence spans 188 residues: Elongation factor P (188 aa).

The protein belongs to the elongation factor P family.

It localises to the cytoplasm. The protein operates within protein biosynthesis; polypeptide chain elongation. Its function is as follows. Involved in peptide bond synthesis. Stimulates efficient translation and peptide-bond synthesis on native or reconstituted 70S ribosomes in vitro. Probably functions indirectly by altering the affinity of the ribosome for aminoacyl-tRNA, thus increasing their reactivity as acceptors for peptidyl transferase. The sequence is that of Elongation factor P from Paramagnetospirillum magneticum (strain ATCC 700264 / AMB-1) (Magnetospirillum magneticum).